The following is an 85-amino-acid chain: Large ribosomal subunit protein bL27 (85 aa).

Positions 1-20 (MATKKAGGSTRNGRDSEAKR) are disordered.

It belongs to the bacterial ribosomal protein bL27 family.

The protein is Large ribosomal subunit protein bL27 of Haemophilus influenzae (strain PittEE).